A 307-amino-acid polypeptide reads, in one-letter code: tRNA dimethylallyltransferase (307 aa).

10-17 is an ATP binding site; sequence GPTAVGKT. 12 to 17 contributes to the substrate binding site; the sequence is TAVGKT. The interval 35–38 is interaction with substrate tRNA; sequence DSMQ.

The protein belongs to the IPP transferase family. Monomer. The cofactor is Mg(2+).

It catalyses the reaction adenosine(37) in tRNA + dimethylallyl diphosphate = N(6)-dimethylallyladenosine(37) in tRNA + diphosphate. Functionally, catalyzes the transfer of a dimethylallyl group onto the adenine at position 37 in tRNAs that read codons beginning with uridine, leading to the formation of N6-(dimethylallyl)adenosine (i(6)A). In Ligilactobacillus salivarius (strain UCC118) (Lactobacillus salivarius), this protein is tRNA dimethylallyltransferase.